Here is a 371-residue protein sequence, read N- to C-terminus: Queuine tRNA-ribosyltransferase (371 aa).

Residue Asp-90 is the Proton acceptor of the active site. Substrate-binding positions include 90–94 (DSGGF), Asp-144, Gln-188, and Gly-215. The tract at residues 246 to 252 (GVGTPED) is RNA binding. The active-site Nucleophile is Asp-265. An RNA binding; important for wobble base 34 recognition region spans residues 270-274 (TRNAR). 4 residues coordinate Zn(2+): Cys-303, Cys-305, Cys-308, and His-334.

This sequence belongs to the queuine tRNA-ribosyltransferase family. As to quaternary structure, homodimer. Within each dimer, one monomer is responsible for RNA recognition and catalysis, while the other monomer binds to the replacement base PreQ1. Requires Zn(2+) as cofactor.

The enzyme catalyses 7-aminomethyl-7-carbaguanine + guanosine(34) in tRNA = 7-aminomethyl-7-carbaguanosine(34) in tRNA + guanine. It participates in tRNA modification; tRNA-queuosine biosynthesis. Its function is as follows. Catalyzes the base-exchange of a guanine (G) residue with the queuine precursor 7-aminomethyl-7-deazaguanine (PreQ1) at position 34 (anticodon wobble position) in tRNAs with GU(N) anticodons (tRNA-Asp, -Asn, -His and -Tyr). Catalysis occurs through a double-displacement mechanism. The nucleophile active site attacks the C1' of nucleotide 34 to detach the guanine base from the RNA, forming a covalent enzyme-RNA intermediate. The proton acceptor active site deprotonates the incoming PreQ1, allowing a nucleophilic attack on the C1' of the ribose to form the product. After dissociation, two additional enzymatic reactions on the tRNA convert PreQ1 to queuine (Q), resulting in the hypermodified nucleoside queuosine (7-(((4,5-cis-dihydroxy-2-cyclopenten-1-yl)amino)methyl)-7-deazaguanosine). This chain is Queuine tRNA-ribosyltransferase, found in Chromobacterium violaceum (strain ATCC 12472 / DSM 30191 / JCM 1249 / CCUG 213 / NBRC 12614 / NCIMB 9131 / NCTC 9757 / MK).